The chain runs to 166 residues: Small ribosomal subunit protein uS5 (166 aa).

The S5 DRBM domain occupies 12 to 75 (YIEKLVQVNR…EAARRNMIQV (64 aa)).

The protein belongs to the universal ribosomal protein uS5 family. As to quaternary structure, part of the 30S ribosomal subunit. Contacts proteins S4 and S8.

With S4 and S12 plays an important role in translational accuracy. Its function is as follows. Located at the back of the 30S subunit body where it stabilizes the conformation of the head with respect to the body. In Pseudomonas putida (strain ATCC 700007 / DSM 6899 / JCM 31910 / BCRC 17059 / LMG 24140 / F1), this protein is Small ribosomal subunit protein uS5.